A 486-amino-acid polypeptide reads, in one-letter code: E3 ubiquitin-protein ligase TRIM58 (486 aa).

The segment at cysteine 16–arginine 61 adopts an RING-type zinc-finger fold. A B box-type zinc finger spans residues proline 91–leucine 132. Positions 96, 99, 118, and 124 each coordinate Zn(2+). Positions leucine 193 to arginine 242 form a coiled coil. The 191-residue stretch at leucine 273–isoleucine 463 folds into the B30.2/SPRY domain.

This sequence belongs to the TRIM/RBCC family. As to expression, expressed in erythroblasts.

It catalyses the reaction S-ubiquitinyl-[E2 ubiquitin-conjugating enzyme]-L-cysteine + [acceptor protein]-L-lysine = [E2 ubiquitin-conjugating enzyme]-L-cysteine + N(6)-ubiquitinyl-[acceptor protein]-L-lysine.. The protein operates within protein modification; protein ubiquitination. Its function is as follows. E3 ubiquitin ligase induced during late erythropoiesis. Directly binds and ubiquitinates the intermediate chain of the microtubule motor dynein (DYNC1LI1/DYNC1LI2), stimulating the degradation of the dynein holoprotein complex. May participate in the erythroblast enucleation process through regulation of nuclear polarization. This is E3 ubiquitin-protein ligase TRIM58 (TRIM58) from Homo sapiens (Human).